Consider the following 187-residue polypeptide: Proline-rich protein 29 (187 aa).

The tract at residues 133–187 (HQPPWQGEPRIQHQPPASRQEEVRDVPPPPPPSATGTVGADVPPASDYYDAESLP) is disordered.

The sequence is that of Proline-rich protein 29 (Prr29) from Mus musculus (Mouse).